The following is a 201-amino-acid chain: FMN-dependent NADH:quinone oxidoreductase (201 aa).

FMN-binding positions include Ser9 and 93 to 96; that span reads MYNF.

The protein belongs to the azoreductase type 1 family. Homodimer. The cofactor is FMN.

The enzyme catalyses 2 a quinone + NADH + H(+) = 2 a 1,4-benzosemiquinone + NAD(+). The catalysed reaction is N,N-dimethyl-1,4-phenylenediamine + anthranilate + 2 NAD(+) = 2-(4-dimethylaminophenyl)diazenylbenzoate + 2 NADH + 2 H(+). In terms of biological role, quinone reductase that provides resistance to thiol-specific stress caused by electrophilic quinones. Also exhibits azoreductase activity. Catalyzes the reductive cleavage of the azo bond in aromatic azo compounds to the corresponding amines. The protein is FMN-dependent NADH:quinone oxidoreductase of Bradyrhizobium sp. (strain BTAi1 / ATCC BAA-1182).